The sequence spans 258 residues: Acyl-[acyl-carrier-protein]--UDP-N-acetylglucosamine O-acyltransferase (258 aa).

The protein belongs to the transferase hexapeptide repeat family. LpxA subfamily. Homotrimer.

It localises to the cytoplasm. It catalyses the reaction a (3R)-hydroxyacyl-[ACP] + UDP-N-acetyl-alpha-D-glucosamine = a UDP-3-O-[(3R)-3-hydroxyacyl]-N-acetyl-alpha-D-glucosamine + holo-[ACP]. It functions in the pathway glycolipid biosynthesis; lipid IV(A) biosynthesis; lipid IV(A) from (3R)-3-hydroxytetradecanoyl-[acyl-carrier-protein] and UDP-N-acetyl-alpha-D-glucosamine: step 1/6. Involved in the biosynthesis of lipid A, a phosphorylated glycolipid that anchors the lipopolysaccharide to the outer membrane of the cell. This is Acyl-[acyl-carrier-protein]--UDP-N-acetylglucosamine O-acyltransferase from Neisseria gonorrhoeae (strain ATCC 700825 / FA 1090).